Reading from the N-terminus, the 87-residue chain is Cell division topological specificity factor (87 aa).

It belongs to the MinE family.

Prevents the cell division inhibition by proteins MinC and MinD at internal division sites while permitting inhibition at polar sites. This ensures cell division at the proper site by restricting the formation of a division septum at the midpoint of the long axis of the cell. The sequence is that of Cell division topological specificity factor from Rhizobium meliloti (strain 1021) (Ensifer meliloti).